Here is a 354-residue protein sequence, read N- to C-terminus: Homeobox protein Nkx-2.4 (354 aa).

A DNA-binding region (homeobox) is located at residues 189–248; that stretch reads RRKRRVLFSQAQVYELERRFKQQKYLSAPEREHLASMIHLTPTQVKIWFQNHRYKMKRQA. Residues 246–329 form a disordered region; sequence RQAKDKAAQQ…PALHGPGGGL (84 aa). Over residues 263–272 the composition is skewed to pro residues; it reads GPPPPPPPSP.

It belongs to the NK-2 homeobox family.

Its subcellular location is the nucleus. Its function is as follows. Probable transcription factor. This is Homeobox protein Nkx-2.4 (NKX2-4) from Homo sapiens (Human).